Here is an 889-residue protein sequence, read N- to C-terminus: MSVVGFDVGNLSSYIAVARGGGIETMANEYSDRLTPSVVSFGEKSRTQGHAARSQAITNYKNTLSQFKRFIARRFSDPSVQKDAKVVPYKITQLPNGNVGMQVQYLGETETFTPEQIYAMILTKLKSTAEINLCRKVVDCVISVPQYYTDLERRGVIHAAEIAGLNCLRVISDTTAVALAYGIYKQDLPTPEEKPRNVVFVDCGHSSLQVSVCAFNKGKLKVLANASDKNLGGRDFDWLLAEHFAVDFQTRYKMDVKSNQRAWLRLMAECDKTKKLMSANATLISMNIECIMNDRDVSGKISRADFEALAAELLKRVEVPLKSVLEQTKLKPEDIHSIEIVGGSSRIPSIKETIKKVFKKECSTTLNQDEAVARGCALQCAILSPTFKVRDFTVTDLTPYPIELEWKGTEGEDGSMEVSSKNHQAPFSKMLTFYRKAPFELVARYADPNLPIPERRIGRFKINGVFPTTEGESSKIKVKVRVDGHGIFNVASASLIEKLPVQAEDAMEDGSPEENGPSKEEGSGASQAENDAPMDQSPVQGGAGEGEASADKEEQADNGSKETSKDSKDQTSESSKSDKESKDQNSEGSKSDNSSTETDAKAAKKTKKTIKTHELSITATTDELSITEVNNFFEKEGKLIAHDRLEKEKNDAKNAVEEYVYEMREKLCDKFEQYISEKERGSFSKLLEETENWLYEDGEDETKSVYQTKINSLKKIGDPVENRFKENLERPGAFEDFGKALVPYIKTLDLYSNGDEKYSHIEKEDMAKVEKCVKEKVAWRDSKVNAQNQKAPHQDPVVTAAQIRSEIQSMKFVCDPIINKPKPKPKEEPPKDNGPTPEEAAKDGGPAPPTTEGGEEKMDTSDQAPTGEASKEGETKPDETKPDVEMELD.

2 disordered regions span residues 504–622 and 812–889; these read EDAM…ATTD and FVCD…MELD. The segment covering 549–585 has biased composition (basic and acidic residues); the sequence is SADKEEQADNGSKETSKDSKDQTSESSKSDKESKDQN. The segment covering 586–597 has biased composition (polar residues); sequence SEGSKSDNSSTE. The span at 869 to 889 shows a compositional bias: basic and acidic residues; it reads ASKEGETKPDETKPDVEMELD.

This sequence belongs to the heat shock protein 70 family.

Functionally, cell surface recognition protein that binds acrosome-reacted sperm and thereby mediates binding and subsequent fusion of the sperm and egg. This Strongylocentrotus purpuratus (Purple sea urchin) protein is 97 kDa heat shock protein.